The primary structure comprises 187 residues: UPF0232 protein JTY_0004 (187 aa).

Basic and acidic residues-rich tracts occupy residues 1–17 and 24–45; these read MTGS…ERSM and LVRR…DAGR. Disordered regions lie at residues 1 to 75 and 168 to 187; these read MTGS…DPQP and PSWR…DTYG.

Belongs to the UPF0232 family.

This is UPF0232 protein JTY_0004 from Mycobacterium bovis (strain BCG / Tokyo 172 / ATCC 35737 / TMC 1019).